The primary structure comprises 510 residues: MVTKEEDCLPPVTETTSRCYSTSSSTPLAELETVRSLEIVESSSSLSPVWLLVIFCIINLLNYMDRGAIASNGVNGSTRSCNDKGKCTLATGIQGHFNLSNFEDGVLSSSFMVGLLIASPIFASLAKRLIGVGLTVWTIAVLGCGSSFAFWFIVLCRMFVGVGEASFISLAAPFIDDNAPQEQKAAWLGLFYMCIPSGVALGYVYGGYVGKHFSWRYAFWGEAVLMAPFAVLGFLMKPLQLKGSETLKNNNRLQVDNEIEHDQFEVSIETSKSSYANAVFKSFTGFAKDMKVLYKEKVFVVNVLGYVSYNFVIGAYSYWGPKAGYNIYKMKNADMIFGAVTIICGIVGTLSGGFILDRVTATIPNAFKLLSGATFLGAVFCFTAFTLKSLYGFIALFALGELLVFATQAPVNYVCLHCVKPSLRPLSMAISTVAIHIFGDVPSSPLVGIVQDHINSWRKTTLILTSILFLAAAIWFIGKINLNSFYSNDESFLVQIKLFVANLCFCKGYS.

Residues 44–64 (SSLSPVWLLVIFCIINLLNYM) form a helical membrane-spanning segment. N-linked (GlcNAc...) asparagine glycans are attached at residues Asn75 and Asn98. The next 11 helical transmembrane spans lie at 106–126 (VLSS…ASLA), 136–156 (VWTI…IVLC), 158–178 (MFVG…IDDN), 185–205 (AAWL…GYVY), 219–239 (FWGE…MKPL), 298–318 (VFVV…AYSY), 336–356 (IFGA…GFIL), 369–387 (LLSG…AFTL), 392–414 (GFIA…VNYV), 430–450 (ISTV…VGIV), and 462–482 (LILT…KINL).

Belongs to the major facilitator superfamily. Spinster (TC 2.A.1.49) family.

The protein resides in the mitochondrion inner membrane. Functionally, probable sphingolipid transporter. This Arabidopsis thaliana (Mouse-ear cress) protein is Probable sphingolipid transporter spinster homolog 3.